We begin with the raw amino-acid sequence, 289 residues long: NAD kinase (289 aa).

Asp-82 serves as the catalytic Proton acceptor. NAD(+)-binding positions include 82-83 (DG), Arg-87, 150-151 (NE), Lys-161, Arg-178, Asp-180, 191-196 (TAYAMS), Ala-215, and Gln-250.

It belongs to the NAD kinase family. A divalent metal cation serves as cofactor.

The protein resides in the cytoplasm. It catalyses the reaction NAD(+) + ATP = ADP + NADP(+) + H(+). Functionally, involved in the regulation of the intracellular balance of NAD and NADP, and is a key enzyme in the biosynthesis of NADP. Catalyzes specifically the phosphorylation on 2'-hydroxyl of the adenosine moiety of NAD to yield NADP. The polypeptide is NAD kinase (Methanosarcina mazei (strain ATCC BAA-159 / DSM 3647 / Goe1 / Go1 / JCM 11833 / OCM 88) (Methanosarcina frisia)).